An 85-amino-acid chain; its full sequence is Putative membrane protein insertion efficiency factor (85 aa).

It belongs to the UPF0161 family.

It localises to the cell inner membrane. Could be involved in insertion of integral membrane proteins into the membrane. This Vibrio cholerae serotype O1 (strain ATCC 39315 / El Tor Inaba N16961) protein is Putative membrane protein insertion efficiency factor.